The sequence spans 202 residues: Adenylyl-sulfate kinase (202 aa).

Glycine 31–serine 38 contacts ATP. Serine 105 functions as the Phosphoserine intermediate in the catalytic mechanism.

It belongs to the APS kinase family.

It catalyses the reaction adenosine 5'-phosphosulfate + ATP = 3'-phosphoadenylyl sulfate + ADP + H(+). Its pathway is sulfur metabolism; hydrogen sulfide biosynthesis; sulfite from sulfate: step 2/3. Catalyzes the synthesis of activated sulfate. This Saccharomyces bayanus (Yeast) protein is Adenylyl-sulfate kinase (MET14).